A 159-amino-acid chain; its full sequence is Deoxyuridine 5'-triphosphate nucleotidohydrolase (159 aa).

DUMP is bound by residues Ser79, Gly92, Asp95, Tyr98, Lys103, Arg148, Phe153, and Gly154.

The protein belongs to the dUTPase family. In terms of assembly, homotrimer. Mg(2+) serves as cofactor.

The enzyme catalyses dUTP + H2O = dUMP + diphosphate + H(+). It functions in the pathway pyrimidine metabolism; dUMP biosynthesis; dUMP from dCTP (dUTP route): step 2/2. In terms of biological role, involved in nucleotide metabolism via production of dUMP, the immediate precursor of thymidine nucleotides, and decreases the intracellular concentration of dUTP so that uracil cannot be incorporated into DNA. This Candida albicans (strain SC5314 / ATCC MYA-2876) (Yeast) protein is Deoxyuridine 5'-triphosphate nucleotidohydrolase (DUT1).